The sequence spans 572 residues: Urease subunit alpha (572 aa).

Residues 130–572 enclose the Urease domain; sequence GGVDTHIHFI…LPMAQRYFLF (443 aa). The Ni(2+) site is built by H135, H137, and K218. N6-carboxylysine is present on K218. Residue H220 coordinates substrate. Ni(2+) is bound by residues H247 and H273. H321 (proton donor) is an active-site residue. Position 361 (D361) interacts with Ni(2+).

The protein belongs to the metallo-dependent hydrolases superfamily. Urease alpha subunit family. As to quaternary structure, heterotrimer of UreA (gamma), UreB (beta) and UreC (alpha) subunits. Three heterotrimers associate to form the active enzyme. Requires Ni cation as cofactor. Carboxylation allows a single lysine to coordinate two nickel ions.

It is found in the cytoplasm. It catalyses the reaction urea + 2 H2O + H(+) = hydrogencarbonate + 2 NH4(+). The protein operates within nitrogen metabolism; urea degradation; CO(2) and NH(3) from urea (urease route): step 1/1. The protein is Urease subunit alpha of Ralstonia nicotianae (strain ATCC BAA-1114 / GMI1000) (Ralstonia solanacearum).